We begin with the raw amino-acid sequence, 256 residues long: Pyridoxine 5'-phosphate synthase (256 aa).

Asn-12 provides a ligand contact to 3-amino-2-oxopropyl phosphate. A 1-deoxy-D-xylulose 5-phosphate-binding site is contributed by 14 to 15 (DH). Arg-23 serves as a coordination point for 3-amino-2-oxopropyl phosphate. Residue His-48 is the Proton acceptor of the active site. 1-deoxy-D-xylulose 5-phosphate-binding residues include Arg-50 and His-55. The Proton acceptor role is filled by Glu-75. Residue Thr-105 coordinates 1-deoxy-D-xylulose 5-phosphate. The Proton donor role is filled by His-199. Residues Gly-200 and 221 to 222 (GY) each bind 3-amino-2-oxopropyl phosphate.

Belongs to the PNP synthase family. Homooctamer; tetramer of dimers.

It is found in the cytoplasm. The catalysed reaction is 3-amino-2-oxopropyl phosphate + 1-deoxy-D-xylulose 5-phosphate = pyridoxine 5'-phosphate + phosphate + 2 H2O + H(+). The protein operates within cofactor biosynthesis; pyridoxine 5'-phosphate biosynthesis; pyridoxine 5'-phosphate from D-erythrose 4-phosphate: step 5/5. Its function is as follows. Catalyzes the complicated ring closure reaction between the two acyclic compounds 1-deoxy-D-xylulose-5-phosphate (DXP) and 3-amino-2-oxopropyl phosphate (1-amino-acetone-3-phosphate or AAP) to form pyridoxine 5'-phosphate (PNP) and inorganic phosphate. The polypeptide is Pyridoxine 5'-phosphate synthase (Bradyrhizobium sp. (strain ORS 278)).